The following is a 148-amino-acid chain: D-aminoacyl-tRNA deacylase (148 aa).

A Gly-cisPro motif, important for rejection of L-amino acids motif is present at residues 137–138; the sequence is GP.

This sequence belongs to the DTD family. In terms of assembly, homodimer.

Its subcellular location is the cytoplasm. It catalyses the reaction glycyl-tRNA(Ala) + H2O = tRNA(Ala) + glycine + H(+). The enzyme catalyses a D-aminoacyl-tRNA + H2O = a tRNA + a D-alpha-amino acid + H(+). In terms of biological role, an aminoacyl-tRNA editing enzyme that deacylates mischarged D-aminoacyl-tRNAs. Also deacylates mischarged glycyl-tRNA(Ala), protecting cells against glycine mischarging by AlaRS. Acts via tRNA-based rather than protein-based catalysis; rejects L-amino acids rather than detecting D-amino acids in the active site. By recycling D-aminoacyl-tRNA to D-amino acids and free tRNA molecules, this enzyme counteracts the toxicity associated with the formation of D-aminoacyl-tRNA entities in vivo and helps enforce protein L-homochirality. This is D-aminoacyl-tRNA deacylase from Latilactobacillus sakei subsp. sakei (strain 23K) (Lactobacillus sakei subsp. sakei).